Reading from the N-terminus, the 811-residue chain is Vacuolar protein sorting-associated protein 70 (811 aa).

A compositionally biased stretch (basic and acidic residues) spans 1–21 (MRMIQRERKREKEEGQLKERT). A disordered region spans residues 1 to 63 (MRMIQRERKR…MNDSFTLTSR (63 aa)). An N-linked (GlcNAc...) asparagine glycan is attached at Asn-55. The chain crosses the membrane as a helical span at residues 90–110 (FMYLILASLLLYMGFVAAFAP). Asn-237 carries an N-linked (GlcNAc...) asparagine glycan. The tract at residues 334–367 (FSDTPGDPTTPGYPSKDSDTEHMSPVGRVPRIPS) is disordered. Positions 336–345 (DTPGDPTTPG) are enriched in low complexity. His-445, Asp-456, and Asp-522 together coordinate Zn(2+). Asn-568 and Asn-599 each carry an N-linked (GlcNAc...) asparagine glycan. A Zn(2+)-binding site is contributed by His-607. N-linked (GlcNAc...) asparagine glycosylation is present at Asn-670.

It belongs to the peptidase M28 family. M28B subfamily. Requires Zn(2+) as cofactor.

It localises to the membrane. Its function is as follows. Involved in vacuolar protein sorting. This chain is Vacuolar protein sorting-associated protein 70 (VPS70), found in Saccharomyces cerevisiae (strain ATCC 204508 / S288c) (Baker's yeast).